Reading from the N-terminus, the 336-residue chain is Terephthalate 1,2-dioxygenase, reductase component 2 (336 aa).

In terms of domain architecture, 2Fe-2S ferredoxin-type spans 3–91; sequence HQIHIHDSDI…DIRIHPSSFR (89 aa). [2Fe-2S] cluster-binding residues include Cys-37, Cys-42, Cys-45, and Cys-75. The FAD-binding FR-type domain maps to 98-197; it reads RKRFTAKVYS…ELPFGSIALK (100 aa).

In terms of assembly, monomer. Part of a multicomponent enzyme system composed of a reductase (TphA1I or TphA1II) and a two-subunit oxygenase component (TphA2I or TphA2II and TphA3I or TphA3II). It depends on FAD as a cofactor. [2Fe-2S] cluster is required as a cofactor.

The enzyme catalyses terephthalate + NADH + O2 + H(+) = (3S,4R)-3,4-dihydroxycyclohexa-1,5-diene-1,4-dicarboxylate + NAD(+). Component of the terephthalate 1,2-dioxygenase multicomponent enzyme system which catalyzes the dioxygenation of terephthalate (TER/TPA) to 1,2-dihydroxy-3,5-cyclohexadiene-1,4-dicarboxylic acid (DCD). TphA1 probably reduces TphA2A3. It can also use 2,5-dicarboxypyridine (PDC) and 1,4-napthalenedicarboxylic acid (NDC) as substrates, and preferentially uses NADPH which is the physiological electron donor. The protein is Terephthalate 1,2-dioxygenase, reductase component 2 (tphA1II) of Comamonas sp.